Here is a 426-residue protein sequence, read N- to C-terminus: Enolase (426 aa).

Position 163 (glutamine 163) interacts with (2R)-2-phosphoglycerate. Glutamate 205 acts as the Proton donor in catalysis. Positions 242, 286, and 313 each coordinate Mg(2+). (2R)-2-phosphoglycerate-binding residues include lysine 338, arginine 367, serine 368, and lysine 389. Catalysis depends on lysine 338, which acts as the Proton acceptor.

This sequence belongs to the enolase family. Mg(2+) serves as cofactor.

It localises to the cytoplasm. It is found in the secreted. Its subcellular location is the cell surface. It catalyses the reaction (2R)-2-phosphoglycerate = phosphoenolpyruvate + H2O. It functions in the pathway carbohydrate degradation; glycolysis; pyruvate from D-glyceraldehyde 3-phosphate: step 4/5. Its function is as follows. Catalyzes the reversible conversion of 2-phosphoglycerate (2-PG) into phosphoenolpyruvate (PEP). It is essential for the degradation of carbohydrates via glycolysis. The chain is Enolase from Helicobacter pylori (strain G27).